The primary structure comprises 287 residues: MWIPYDIRGSLKPESPAGTIRLSRTDTSPREFLVGFFLRNPVTQAWELDIAVPASGLELALPGPGSPLPLRIYGNEAGKLAEAILRITAPSAETALAQAHGVLQAWLLRQVVETGRGMAIAGWRIADPAHEARWRCTPFRPSAMSPDFVAQVPLAPDLLPLAELFQRARNAPDAASRMLAAYAVLCGLRDRPVASDFRVTQEMLIHAGAMEHQAGLQGLDLAALIAALRPEHDRLIAPGGLLAALSDDLAAQQRLARLANLADLAAHRLLLAQIRTRAPAPQPMGAA.

Its pathway is one-carbon metabolism; methylamine degradation. The chain is Methylamine utilization protein MauJ (mauJ) from Paracoccus denitrificans.